We begin with the raw amino-acid sequence, 272 residues long: uncharacterized protein (272 aa).

K185 (schiff-base intermediate with substrate) is an active-site residue.

Belongs to the DeoC/FbaB aldolase family.

This is an uncharacterized protein from Saccharolobus solfataricus (strain ATCC 35092 / DSM 1617 / JCM 11322 / P2) (Sulfolobus solfataricus).